The primary structure comprises 385 residues: MEWNGLKMIISTMEPQVSNGPTSNTSNGPSSNNRNCPSPMQTGAATDDSKTNLIVNYLPQNMTQEEFRSLFGSIGEIESCKLVRDKITGQSLGYGFVNYIDPKDAEKAINTLNGLRLQTKTIKVSYARPSSASIRDANLYVSGLPKTMTQKELEQLFSQYGRIITSRILVDQVTGVSRGVGFIRFDKRIEAEEAIKGLNGQKPSGATEPITVKFANNPSQKSSQALLSQLYQSPNRRYPGPLHHQAQRFRLDNLLNMAYGVKRLMSGPVPPSACPPRFSPITIDGMTSLVGMNIPGHTGTGWCIFVYNLSPDSDESVLWQLFGPFGAVNNVKVIRDFNTNKCKGFGFVTMTNYDEAAMAIASLNGYRLGDRVLQVSFKTNKAHKS.

The interval 12-48 is disordered; the sequence is TMEPQVSNGPTSNTSNGPSSNNRNCPSPMQTGAATDD. Positions 18-33 are enriched in low complexity; the sequence is SNGPTSNTSNGPSSNN. Residues 34–44 show a composition bias toward polar residues; the sequence is RNCPSPMQTGA. Residue S38 is modified to Phosphoserine. RRM domains follow at residues 51-129 and 137-217; these read TNLI…YARP and ANLY…FANN. S233 carries the phosphoserine modification. Asymmetric dimethylarginine; by CARM1; alternate is present on R248. The residue at position 248 (R248) is an Omega-N-methylarginine; by CARM1; alternate. The RRM 3 domain occupies 302–380; the sequence is WCIFVYNLSP…RVLQVSFKTN (79 aa).

Belongs to the RRM elav family. In terms of assembly, component of a TAU mRNP complex, at least composed of IGF2BP1, ELAVL4 and G3BP. Associates with the EIF4F cap-binding complex, composed of EIF4G, EIF4A, EIF4E and PABP. Within the EIF4F cap-binding complex, interacts with EIF4A. Interacts with SMN (via Tudor domain) in an RNA-independent manner; the interaction is required for localization of ELAVL4 to RNA granules. Interacts with MAP1 light chain LC1 (via C-terminus); the interaction contributes to the association of ELAVL4 with microtubules. Interacts with MAP1 light chain LC2. Methylated by CARM1, which leads to reduced RNA-binding activity and enhanced interaction with SMN. Methylation at Arg-248 by CARM1 weakens protective binding to the 3'UTR of CDKN1A mRNA and down-regulates CDKN1A protein expression, thereby maintaining cells in a proliferative state. Methylation is inhibited by NGF, which facilitates neurite outgrowth. As to expression, expressed in the brain, including the hippocampus, and in pancreatic beta cells (at protein level). Expressed in pyramidal neurons of the hippocampal CA3 and CA1 region and in the hilus but not in dentate granule cells (at protein level). Expressed in the dorsal root ganglion and the spinal cord (at protein level). Expressed in neural stem and progenitor cells (at protein level). Expressed in radial glia-like cells and in transient amplifying cells in the subventricular zone (SVZ), and in immature neurons both in the SVZ and the rostral migratory stream as well as in mature neurons in the olfactory bulb (at protein level). Expressed in testis and in the brain, including the hippocampus, the neocortex and the cerebellum. Expressed in lower- but not upper-layer primary neurons of the mature neocortex, in the hippocampal regions CA1-3 and the dentate gyrus. Expressed in the mitral and granule cells of the olfactory bulb, cerebral cortex, entorhinal cortex, thalamus, medial habenula, amygdala, granule cells of the cerebellum, pons, olivary nucleus, dorsal and ventral spinal cord and in dorsal root ganglia. Expressed in motor neurons. Isoform 4: Expressed in the brain. Isoform 5: Expressed in the brain. Isoform 6: Expressed in the brain. Isoform 7: Expressed in the brain. Isoform 8: Expressed in the brain. Isoform 9: Expressed in the brain. Isoform 10: Expressed in the brain. Isoform 11: Expressed in the brain.

It is found in the cytoplasm. The protein localises to the perikaryon. Its subcellular location is the cell projection. The protein resides in the dendrite. It localises to the axon. It is found in the growth cone. In terms of biological role, RNA-binding protein that is involved in the post-transcriptional regulation of mRNAs. Plays a role in the regulation of mRNA stability, alternative splicing and translation. Binds to AU-rich element (ARE) sequences in the 3' untranslated region (3'UTR) of target mRNAs, including GAP43, VEGF, FOS, CDKN1A and ACHE mRNA. Many of the target mRNAs are coding for RNA-binding proteins, transcription factors and proteins involved in RNA processing and/or neuronal development and function. By binding to the mRNA 3'UTR, decreases mRNA deadenylation and thereby contributes to the stabilization of mRNA molecules and their protection from decay. Also binds to the polyadenylated (poly(A)) tail in the 3'UTR of mRNA, thereby increasing its affinity for mRNA binding. Mainly plays a role in neuron-specific RNA processing by stabilization of mRNAs such as GAP43, ACHE and mRNAs of other neuronal proteins, thereby contributing to the differentiation of neural progenitor cells, nervous system development, learning and memory mechanisms. Involved in the negative regulation of the proliferative activity of neuronal stem cells and in the positive regulation of neuronal differentiation of neural progenitor cells. Promotes neuronal differentiation of neural stem/progenitor cells in the adult subventricular zone of the hippocampus by binding to and stabilizing SATB1 mRNA. Binds and stabilizes MSI1 mRNA in neural stem cells. Exhibits increased binding to ACHE mRNA during neuronal differentiation, thereby stabilizing ACHE mRNA and enhancing its expression. Protects CDKN1A mRNA from decay by binding to its 3'-UTR. May bind to APP and BACE1 mRNAS and the BACE1AS lncRNA and enhance their stabilization. Plays a role in neurite outgrowth and in the establishment and maturation of dendritic arbors, thereby contributing to neocortical and hippocampal circuitry function. Stabilizes GAP43 mRNA and protects it from decay during postembryonic development in the brain. By promoting the stabilization of GAP43 mRNA, plays a role in NGF-mediated neurite outgrowth. Binds to BDNF long 3'UTR mRNA, thereby leading to its stabilization and increased dendritic translation after activation of PKC. By increasing translation of BDNF after nerve injury, may contribute to nerve regeneration. Acts as a stabilizing factor by binding to the 3'UTR of NOVA1 mRNA, thereby increasing its translation and enhancing its functional activity in neuron-specific splicing. Stimulates translation of mRNA in a poly(A)- and cap-dependent manner, possibly by associating with the EIF4F cap-binding complex. May also negatively regulate translation by binding to the 5'UTR of Ins2 mRNA, thereby repressing its translation. Upon glucose stimulation, Ins2 mRNA is released from ELAVL4 and translational inhibition is abolished. Also plays a role in the regulation of alternative splicing. May regulate alternative splicing of CALCA pre-mRNA into Calcitonin and Calcitonin gene-related peptide 1 (CGRP) by competing with splicing regulator TIAR for binding to U-rich sequences of CALCA pre-mRNA. The polypeptide is ELAV-like protein 4 (Elavl4) (Mus musculus (Mouse)).